The chain runs to 270 residues: Putative pyruvate, phosphate dikinase regulatory protein (270 aa).

Residue 151–158 participates in ADP binding; it reads GVSRTSKT.

It belongs to the pyruvate, phosphate/water dikinase regulatory protein family. PDRP subfamily.

The catalysed reaction is N(tele)-phospho-L-histidyl/L-threonyl-[pyruvate, phosphate dikinase] + ADP = N(tele)-phospho-L-histidyl/O-phospho-L-threonyl-[pyruvate, phosphate dikinase] + AMP + H(+). It catalyses the reaction N(tele)-phospho-L-histidyl/O-phospho-L-threonyl-[pyruvate, phosphate dikinase] + phosphate + H(+) = N(tele)-phospho-L-histidyl/L-threonyl-[pyruvate, phosphate dikinase] + diphosphate. In terms of biological role, bifunctional serine/threonine kinase and phosphorylase involved in the regulation of the pyruvate, phosphate dikinase (PPDK) by catalyzing its phosphorylation/dephosphorylation. This chain is Putative pyruvate, phosphate dikinase regulatory protein, found in Bacillus velezensis (strain DSM 23117 / BGSC 10A6 / LMG 26770 / FZB42) (Bacillus amyloliquefaciens subsp. plantarum).